A 276-amino-acid polypeptide reads, in one-letter code: NADPH-dependent 7-cyano-7-deazaguanine reductase (276 aa).

83 to 85 (IES) is a binding site for substrate. An NADPH-binding site is contributed by 85–86 (SK). Residue Cys-184 is the Thioimide intermediate of the active site. Asp-191 functions as the Proton donor in the catalytic mechanism. Substrate is bound at residue 223 to 224 (HE). NADPH is bound at residue 252–253 (RG).

The protein belongs to the GTP cyclohydrolase I family. QueF type 2 subfamily. In terms of assembly, homodimer.

It is found in the cytoplasm. It carries out the reaction 7-aminomethyl-7-carbaguanine + 2 NADP(+) = 7-cyano-7-deazaguanine + 2 NADPH + 3 H(+). The protein operates within tRNA modification; tRNA-queuosine biosynthesis. In terms of biological role, catalyzes the NADPH-dependent reduction of 7-cyano-7-deazaguanine (preQ0) to 7-aminomethyl-7-deazaguanine (preQ1). This Pseudomonas putida (strain ATCC 47054 / DSM 6125 / CFBP 8728 / NCIMB 11950 / KT2440) protein is NADPH-dependent 7-cyano-7-deazaguanine reductase.